A 790-amino-acid polypeptide reads, in one-letter code: Pre-mRNA-splicing factor cwf3 (790 aa).

17 HAT repeats span residues 12–44, 45–77, 89–121, 123–157, 159–190, 193–228, 233–266, 268–303, 331–364, 368–402, 404–440, 457–492, 494–526, 528–562, 567–601, 639–673, and 675–709; these read DLIN…THEG, STLE…LRVA, EAFA…FLMK, PNVT…YAED, GGLF…KLGL, EAAR…LVVQ, TQNI…YYIR, GDYE…FEEQ, KILD…FLED, KVVQ…FYEN, DDLE…MELR, APRK…LEES, GTIE…LLEE, AYFE…KFVK, THME…FEEK, YGVL…METK, and GEID…FEIR. Residues 769 to 790 form a disordered region; that stretch reads LAGFVLSKSNPQETSKITGEEN. Polar residues predominate over residues 775–790; sequence SKSNPQETSKITGEEN.

Belongs to the crooked-neck family. Belongs to the 40S cdc5-associated complex (or cwf complex), a spliceosome sub-complex reminiscent of a late-stage spliceosome composed of the U2, U5 and U6 snRNAs and at least brr2, cdc5, cwf2/prp3, cwf3/syf1, cwf4/syf3, cwf5/ecm2, spp42/cwf6, cwf7/spf27, cwf8, cwf9, cwf10, cwf11, cwf12, prp45/cwf13, cwf14, cwf15, cwf16, cwf17, cwf18, cwf19, cwf20, cwf21, cwf22, cwf23, cwf24, cwf25, cwf26, cyp7/cwf27, cwf28, cwf29/ist3, lea1, msl1, prp5/cwf1, prp10, prp12/sap130, prp17, prp22, sap61, sap62, sap114, sap145, slu7, smb1, smd1, smd3, smf1, smg1 and syf2.

The protein localises to the nucleus. In terms of biological role, involved in pre-mRNA splicing and cell cycle progression. In Schizosaccharomyces pombe (strain 972 / ATCC 24843) (Fission yeast), this protein is Pre-mRNA-splicing factor cwf3 (cwf3).